We begin with the raw amino-acid sequence, 1958 residues long: Rho GTPase-activating protein 21 (1958 aa).

A disordered region spans residues 1 to 42; it reads MMATRRTGLSEGDGDKLKACEVSKNKDGKEQSETVSLSEDET. Residues 13 to 32 show a composition bias toward basic and acidic residues; the sequence is DGDKLKACEVSKNKDGKEQS. Phosphoserine is present on residues Ser-36 and Ser-57. Positions 50-159 constitute a PDZ domain; the sequence is TVTLKRTSQG…TLELSVMPKD (110 aa). Composition is skewed to polar residues over residues 286–295, 306–325, and 418–436; these read SNRNNHTGPS, SEQT…LSIP, and ASQS…TTLQ. Disordered regions lie at residues 286–325 and 418–458; these read SNRN…LSIP and ASQS…QRSV. The span at 448 to 458 shows a compositional bias: low complexity; the sequence is PQSVQIRQRSV. Phosphoserine is present on Ser-459. Arg-554 and Arg-575 each carry omega-N-methylarginine. Phosphoserine occurs at positions 612, 616, and 625. Polar residues predominate over residues 659–687; that stretch reads SLLNQQTWVRTDSAPDQQVETGKSPSLSG. Residues 659 to 751 are disordered; the sequence is SLLNQQTWVR…PSGRQTPQPL (93 aa). At Ser-717 the chain carries Phosphoserine. Residues 729–742 show a composition bias toward basic and acidic residues; it reads LDNKEAVILREKPP. Residue Thr-747 is modified to Phosphothreonine. Ser-857, Ser-862, and Ser-881 each carry phosphoserine. The interval 859–885 is disordered; sequence DHESVGPPSLDAQPNSKTERSKSYDEG. Residues 875 to 885 show a composition bias toward basic and acidic residues; the sequence is KTERSKSYDEG. Residue Tyr-882 is modified to Phosphotyrosine. Ser-924, Ser-926, Ser-954, Ser-1099, and Ser-1115 each carry phosphoserine. Residues 930–1097 are interaction with ARF1 and ARF6; it reads SDAAKEGWLH…AKSEPKTQSP (168 aa). Residues 931 to 1040 enclose the PH domain; it reads DAAKEGWLHF…WIKTIQESSN (110 aa). The disordered stretch occupies residues 1086–1133; it reads LGAKSEPKTQSPHSPKEESERKLLSKDDTSPPKDKGTWRKGIPSIMRK. Residues 1099–1122 show a composition bias toward basic and acidic residues; the sequence is SPKEESERKLLSKDDTSPPKDKGT. Residues 1147–1339 form the Rho-GAP domain; it reads VRLDDCPPAH…TLIQHHDWFF (193 aa). 4 disordered regions span residues 1348–1401, 1418–1575, 1598–1642, and 1655–1686; these read LTTV…GSGK, SRKR…KHSE, SLDS…SEFP, and RGKL…SSLD. Positions 1349–1362 are enriched in polar residues; sequence TTVQEESTVDSQPV. Residues 1383-1401 are compositionally biased toward low complexity; it reads SDSATSDSTKSKGSWGSGK. Phosphoserine occurs at positions 1418, 1432, and 1433. 2 stretches are compositionally biased toward basic and acidic residues: residues 1441 to 1466 and 1477 to 1493; these read FFKK…ETLG and NSTR…KISL. Residue Lys-1444 forms a Glycyl lysine isopeptide (Lys-Gly) (interchain with G-Cter in SUMO) linkage. A Phosphoserine modification is found at Ser-1504. Thr-1516 carries the phosphothreonine modification. A Phosphoserine modification is found at Ser-1527. Residues 1544–1559 show a composition bias toward low complexity; the sequence is SDSGTLLSTSSQASLA. Positions 1592–1861 are interaction with CTNNA1; sequence SATYLTSLDS…WLARERLRTS (270 aa). The segment covering 1603-1612 has biased composition (polar residues); it reads RLSPEVQSVA. The segment covering 1624 to 1634 has biased composition (basic and acidic residues); that stretch reads SELISEGRPVE. Phosphoserine is present on Ser-1669. Over residues 1671–1686 the composition is skewed to polar residues; that stretch reads GSELSCTEGSLTSSLD. At Thr-1682 the chain carries Phosphothreonine. The residue at position 1742 (Ser-1742) is a Phosphoserine. The interval 1860–1958 is disordered; sequence TSTSDLSRGE…GSKAEFHPCL (99 aa). A compositionally biased stretch (polar residues) spans 1874 to 1909; it reads QTENPSTREIATTDTPLSLHCNTGSSSSTLASTNRP. Ser-1917 is modified (phosphoserine). Residues 1918–1931 show a composition bias toward polar residues; sequence PDQINGESFQNVSK.

Interacts with GTP-bound ARF1 and ARF6. Interacts with CTNNA1. Sumoylated with SUMO2 and SUMO3 in proliferating lymphocytes. Widely expressed with higher expression in brain, heart, skeletal muscle and placenta.

The protein localises to the golgi apparatus membrane. It localises to the cell junction. The protein resides in the cytoplasmic vesicle membrane. Its subcellular location is the cytoplasm. It is found in the cytoskeleton. In terms of biological role, functions as a GTPase-activating protein (GAP) for RHOA and CDC42. Downstream partner of ARF1 which may control Golgi apparatus structure and function. Also required for CTNNA1 recruitment to adherens junctions. This Homo sapiens (Human) protein is Rho GTPase-activating protein 21 (ARHGAP21).